A 327-amino-acid chain; its full sequence is MDSSTAPLSIITKLALFERTCDSSYSPLAENLKYLVQFVYLLPAAMLHARILYILLWKHRNLYLKQSFYILFIMSCIACFTLVVQDIFFARVFQYMTQFCEPMSEFVENYPIFPAIYYPLQQHLHCAQPIIQILLTVNRMSCVVIPWKHSQVWKSFMKYAIALVILTPFLFIWNIIISKKLPVYTFGGFYIGYERVVIWATMTLFMLILRAITIVITAVCTFITVLRLTRMSKRLVSSERTLCIASFLISSCFLGTAAAESLFAFQVVRTSTSISYFLLPISWDILNVGTPIVMVMASSQLRRHVFGILKRSRSNSRVEDGTIVTGF.

6 helical membrane passes run 35 to 55, 70 to 90, 157 to 177, 181 to 203, 244 to 264, and 277 to 297; these read LVQF…LYIL, ILFI…IFFA, MKYA…NIII, LPVY…ATMT, IASF…SLFA, and FLLP…MVMA.

It belongs to the nematode receptor-like protein srg family.

The protein resides in the membrane. In Caenorhabditis elegans, this protein is Serpentine receptor class gamma-2 (srg-2).